The sequence spans 446 residues: Phosphoglucosamine mutase (446 aa).

S103 serves as the catalytic Phosphoserine intermediate. Mg(2+) is bound by residues S103, D242, D244, and D246. Position 103 is a phosphoserine (S103).

This sequence belongs to the phosphohexose mutase family. Requires Mg(2+) as cofactor. In terms of processing, activated by phosphorylation.

It carries out the reaction alpha-D-glucosamine 1-phosphate = D-glucosamine 6-phosphate. Functionally, catalyzes the conversion of glucosamine-6-phosphate to glucosamine-1-phosphate. The sequence is that of Phosphoglucosamine mutase from Vibrio atlanticus (strain LGP32) (Vibrio splendidus (strain Mel32)).